Here is a 361-residue protein sequence, read N- to C-terminus: 3-dehydroquinate synthase (361 aa).

Belongs to the archaeal-type DHQ synthase family.

It catalyses the reaction 2-amino-2,3,7-trideoxy-D-lyxo-hept-6-ulosonate + NAD(+) + H2O = 3-dehydroquinate + NH4(+) + NADH + H(+). In terms of biological role, catalyzes the oxidative deamination and cyclization of 2-amino-3,7-dideoxy-D-threo-hept-6-ulosonic acid (ADH) to yield 3-dehydroquinate (DHQ), which is fed into the canonical shikimic pathway of aromatic amino acid biosynthesis. The protein is 3-dehydroquinate synthase of Methanococcus maripaludis (strain C7 / ATCC BAA-1331).